Reading from the N-terminus, the 121-residue chain is Neuropeptide-like protein 7 (121 aa).

A signal peptide spans 1–22 (MYIKAALLIVVLFGVASQITSA).

Its function is as follows. May regulate lifespan in response to food availability and oxidative stress. The protein is Neuropeptide-like protein 7 of Caenorhabditis elegans.